Reading from the N-terminus, the 222-residue chain is Protein-L-isoaspartate O-methyltransferase (222 aa).

Residue S73 is part of the active site.

The protein belongs to the methyltransferase superfamily. L-isoaspartyl/D-aspartyl protein methyltransferase family.

The protein localises to the cytoplasm. It carries out the reaction [protein]-L-isoaspartate + S-adenosyl-L-methionine = [protein]-L-isoaspartate alpha-methyl ester + S-adenosyl-L-homocysteine. In terms of biological role, catalyzes the methyl esterification of L-isoaspartyl residues in peptides and proteins that result from spontaneous decomposition of normal L-aspartyl and L-asparaginyl residues. It plays a role in the repair and/or degradation of damaged proteins. In Chromobacterium violaceum (strain ATCC 12472 / DSM 30191 / JCM 1249 / CCUG 213 / NBRC 12614 / NCIMB 9131 / NCTC 9757 / MK), this protein is Protein-L-isoaspartate O-methyltransferase.